We begin with the raw amino-acid sequence, 169 residues long: uncharacterized protein (169 aa).

One can recognise an HTH asnC-type domain in the interval 18–79 (LDRADVALLN…IVSPKAVGRP (62 aa)). The H-T-H motif DNA-binding region spans 37–56 (SEELADKVGLSPTACQRRLK).

This is an uncharacterized protein from Sinorhizobium fredii (strain NBRC 101917 / NGR234).